Here is a 564-residue protein sequence, read N- to C-terminus: Ribulokinase (564 aa).

The protein belongs to the ribulokinase family.

It carries out the reaction D-ribulose + ATP = D-ribulose 5-phosphate + ADP + H(+). The enzyme catalyses L-ribulose + ATP = L-ribulose 5-phosphate + ADP + H(+). It participates in carbohydrate degradation; L-arabinose degradation via L-ribulose; D-xylulose 5-phosphate from L-arabinose (bacterial route): step 2/3. This is Ribulokinase from Anoxybacillus flavithermus (strain DSM 21510 / WK1).